The following is a 262-amino-acid chain: Thiazole synthase (262 aa).

Lys-96 acts as the Schiff-base intermediate with DXP in catalysis. Residues Gly-157, 184 to 185 (AG), and 206 to 207 (NT) each bind 1-deoxy-D-xylulose 5-phosphate.

Belongs to the ThiG family. As to quaternary structure, homotetramer. Forms heterodimers with either ThiH or ThiS.

It localises to the cytoplasm. The catalysed reaction is [ThiS sulfur-carrier protein]-C-terminal-Gly-aminoethanethioate + 2-iminoacetate + 1-deoxy-D-xylulose 5-phosphate = [ThiS sulfur-carrier protein]-C-terminal Gly-Gly + 2-[(2R,5Z)-2-carboxy-4-methylthiazol-5(2H)-ylidene]ethyl phosphate + 2 H2O + H(+). The protein operates within cofactor biosynthesis; thiamine diphosphate biosynthesis. Its function is as follows. Catalyzes the rearrangement of 1-deoxy-D-xylulose 5-phosphate (DXP) to produce the thiazole phosphate moiety of thiamine. Sulfur is provided by the thiocarboxylate moiety of the carrier protein ThiS. In vitro, sulfur can be provided by H(2)S. The protein is Thiazole synthase of Legionella pneumophila (strain Corby).